The following is a 62-amino-acid chain: Bacteriocin piscicolin-126 (62 aa).

Residues 1 to 18 (MKTVKELSVKEMQLTTGG) constitute a propeptide that is removed on maturation. A disulfide bond links C27 and C32.

It is found in the secreted. Its function is as follows. Inhibits the growth of several Gram-positive bacteria, especially the food-borne pathogen L.monocytogenes, but has no effect on the growth of a number of yeasts and Gram-negative bacteria. The protein is Bacteriocin piscicolin-126 (pisA) of Carnobacterium maltaromaticum (Carnobacterium piscicola).